Consider the following 251-residue polypeptide: Triosephosphate isomerase (251 aa).

10-12 lines the substrate pocket; it reads NWK. Residue histidine 99 is the Electrophile of the active site. Glutamate 167 (proton acceptor) is an active-site residue. Substrate contacts are provided by residues glycine 173, serine 211, and 232–233; that span reads GG.

It belongs to the triosephosphate isomerase family. Homodimer.

The protein resides in the cytoplasm. The enzyme catalyses D-glyceraldehyde 3-phosphate = dihydroxyacetone phosphate. Its pathway is carbohydrate biosynthesis; gluconeogenesis. It participates in carbohydrate degradation; glycolysis; D-glyceraldehyde 3-phosphate from glycerone phosphate: step 1/1. Its function is as follows. Involved in the gluconeogenesis. Catalyzes stereospecifically the conversion of dihydroxyacetone phosphate (DHAP) to D-glyceraldehyde-3-phosphate (G3P). The chain is Triosephosphate isomerase from Neisseria meningitidis serogroup A / serotype 4A (strain DSM 15465 / Z2491).